Reading from the N-terminus, the 1310-residue chain is Multidrug resistance protein 4 (1310 aa).

A run of 5 helical transmembrane segments spans residues 48-68, 125-145, 196-216, 223-243, and 299-319; these read WLDL…GVLT, MVCF…CFFV, KFGI…IGFA, LVIM…AVFA, and GLTV…AFSL. An ABC transmembrane type-1 1 domain is found at 55–368; the sequence is AVGIFGSIGC…IAIPLNIFAT (314 aa). An N-linked (GlcNAc...) asparagine glycan is attached at Asn336. A helical transmembrane segment spans residues 342-362; it reads VMIVFICVLIATQGLSIIAIP. N-linked (GlcNAc...) asparagine glycosylation is present at Asn402. The ABC transporter 1 domain maps to 403 to 642; the sequence is ITLEDVQFRY…KGTYYGLVKR (240 aa). ATP is bound at residue 438–445; that stretch reads GASGCGKS. An N-linked (GlcNAc...) asparagine glycan is attached at Asn608. A run of 2 helical transmembrane segments spans residues 721-741 and 773-793; these read WFLS…FPFF and IIVV…IGLF. Residues 722–1030 form the ABC transmembrane type-1 2 domain; sequence FLSTFGFIGG…LGNIVPDIGK (309 aa). A glycan (N-linked (GlcNAc...) asparagine) is linked at Asn816. The next 3 helical transmembrane spans lie at 849 to 869, 871 to 891, and 945 to 965; these read VGNV…AFYY, WKVS…VFIN, and IGIY…TLLT. In terms of domain architecture, ABC transporter 2 spans 1065 to 1304; that stretch reads IEFKDICFRY…KGFYYTLAMQ (240 aa). Position 1100-1107 (1100-1107) interacts with ATP; that stretch reads GASGCGKS.

Belongs to the ABC transporter superfamily. ABCB family. Multidrug resistance exporter (TC 3.A.1.201) subfamily.

The protein localises to the membrane. The enzyme catalyses ATP + H2O + xenobioticSide 1 = ADP + phosphate + xenobioticSide 2.. In terms of biological role, energy-dependent efflux pump responsible for decreased drug accumulation in multidrug resistance parasites. The protein is Multidrug resistance protein 4 of Entamoeba histolytica (strain ATCC 30459 / HM-1:IMSS / ABRM).